The following is a 296-amino-acid chain: Phosphoribosylaminoimidazole-succinocarboxamide synthase (296 aa).

Belongs to the SAICAR synthetase family.

It carries out the reaction 5-amino-1-(5-phospho-D-ribosyl)imidazole-4-carboxylate + L-aspartate + ATP = (2S)-2-[5-amino-1-(5-phospho-beta-D-ribosyl)imidazole-4-carboxamido]succinate + ADP + phosphate + 2 H(+). The protein operates within purine metabolism; IMP biosynthesis via de novo pathway; 5-amino-1-(5-phospho-D-ribosyl)imidazole-4-carboxamide from 5-amino-1-(5-phospho-D-ribosyl)imidazole-4-carboxylate: step 1/2. The polypeptide is Phosphoribosylaminoimidazole-succinocarboxamide synthase (Geobacter metallireducens (strain ATCC 53774 / DSM 7210 / GS-15)).